The following is a 181-amino-acid chain: 3-hydroxyacyl-[acyl-carrier-protein] dehydratase FabZ (181 aa).

Residue His-54 is part of the active site.

It belongs to the thioester dehydratase family. FabZ subfamily.

The protein resides in the cytoplasm. The enzyme catalyses a (3R)-hydroxyacyl-[ACP] = a (2E)-enoyl-[ACP] + H2O. Its function is as follows. Involved in unsaturated fatty acids biosynthesis. Catalyzes the dehydration of short chain beta-hydroxyacyl-ACPs and long chain saturated and unsaturated beta-hydroxyacyl-ACPs. The polypeptide is 3-hydroxyacyl-[acyl-carrier-protein] dehydratase FabZ (Yersinia pestis).